The sequence spans 429 residues: Serine--tRNA ligase (429 aa).

An L-serine-binding site is contributed by 236 to 238; that stretch reads TAE. 267–269 lines the ATP pocket; it reads RSE. Position 290 (Glu290) interacts with L-serine. ATP is bound at residue 354–357; that stretch reads EVSS. Ser390 lines the L-serine pocket.

Belongs to the class-II aminoacyl-tRNA synthetase family. Type-1 seryl-tRNA synthetase subfamily. Homodimer. The tRNA molecule binds across the dimer.

It localises to the cytoplasm. It carries out the reaction tRNA(Ser) + L-serine + ATP = L-seryl-tRNA(Ser) + AMP + diphosphate + H(+). The catalysed reaction is tRNA(Sec) + L-serine + ATP = L-seryl-tRNA(Sec) + AMP + diphosphate + H(+). It participates in aminoacyl-tRNA biosynthesis; selenocysteinyl-tRNA(Sec) biosynthesis; L-seryl-tRNA(Sec) from L-serine and tRNA(Sec): step 1/1. Functionally, catalyzes the attachment of serine to tRNA(Ser). Is also able to aminoacylate tRNA(Sec) with serine, to form the misacylated tRNA L-seryl-tRNA(Sec), which will be further converted into selenocysteinyl-tRNA(Sec). The polypeptide is Serine--tRNA ligase (Wigglesworthia glossinidia brevipalpis).